Here is a 178-residue protein sequence, read N- to C-terminus: Bifunctional protein PyrR (178 aa).

The short motif at 99-111 is the PRPP-binding element; that stretch reads VILVDDVLFTGRT.

This sequence belongs to the purine/pyrimidine phosphoribosyltransferase family. PyrR subfamily. In terms of assembly, homodimer and homohexamer; in equilibrium.

The enzyme catalyses UMP + diphosphate = 5-phospho-alpha-D-ribose 1-diphosphate + uracil. Its function is as follows. Regulates transcriptional attenuation of the pyrimidine nucleotide (pyr) operon by binding in a uridine-dependent manner to specific sites on pyr mRNA. This disrupts an antiterminator hairpin in the RNA and favors formation of a downstream transcription terminator, leading to a reduced expression of downstream genes. Functionally, also displays a weak uracil phosphoribosyltransferase activity which is not physiologically significant. The chain is Bifunctional protein PyrR from Limosilactobacillus reuteri subsp. reuteri (strain JCM 1112) (Lactobacillus reuteri).